The following is a 167-amino-acid chain: Alpha-crystallin A chain (167 aa).

M1 is modified (N-acetylmethionine). The 112-residue stretch at 47 to 158 folds into the sHSP domain; the sequence is YYRQSFFRGF…GERPIPVSRE (112 aa). Residues H94, E96, H101, and H148 each contribute to the Zn(2+) site. The tract at residues 143 to 167 is disordered; that stretch reads SLDSSHGERPIPVSREEKPTSAPSS. The span at 147–161 shows a compositional bias: basic and acidic residues; sequence SHGERPIPVSREEKP. The O-linked (GlcNAc) serine glycan is linked to S156.

Belongs to the small heat shock protein (HSP20) family. Heteropolymer composed of three CRYAA and one CRYAB subunits. Inter-subunit bridging via zinc ions enhances stability, which is crucial as there is no protein turn over in the lens. Can also form homodimers and homotetramers (dimers of dimers) which serve as the building blocks of homooligomers. Within homooligomers, the zinc-binding motif is created from residues of 3 different molecules. His-94 and Glu-96 from one molecule are ligands of the zinc ion, and His-101 and His-148 residues from additional molecules complete the site with tetrahedral coordination geometry.

The protein localises to the cytoplasm. The protein resides in the nucleus. Its function is as follows. Contributes to the transparency and refractive index of the lens. May act as a chaperone, preventing aggregation of various proteins under a wide range of stress conditions. The chain is Alpha-crystallin A chain (CRYAA) from Pelophylax lessonae (Pool frog).